We begin with the raw amino-acid sequence, 911 residues long: Desmoglein-1-gamma (911 aa).

A signal peptide spans M1 to S23. Positions E24–R49 are excised as a propeptide. 3 consecutive Cadherin domains span residues E50–F157, S158–L269, and E270–S389. Topologically, residues E50–P519 are extracellular. A glycan (N-linked (GlcNAc...) (high mannose) asparagine) is linked at N110. N-linked (GlcNAc...) asparagine glycosylation is present at N180. N401 is a glycosylation site (N-linked (GlcNAc...) asparagine). The helical transmembrane segment at A520–I540 threads the bilayer. Residues S541–P911 are Cytoplasmic-facing. Desmoglein repeat repeat units lie at residues A783–E809, S810–V839, G840–I869, and A870–I897. One copy of the Desmoglein repeat 5; truncated repeat lies at Q898–P911.

As to quaternary structure, interacts with DSC3; there is evidence to suggest that the interaction promotes cell-cell adhesion of keratinocytes. As to expression, expressed in epidermis, brain, liver, skeletal, muscle and testis.

It is found in the cell membrane. The protein resides in the cell junction. The protein localises to the desmosome. It localises to the cytoplasm. Its subcellular location is the nucleus. Functionally, component of intercellular desmosome junctions. Involved in the interaction of plaque proteins and intermediate filaments mediating cell-cell adhesion. In Mus musculus (Mouse), this protein is Desmoglein-1-gamma (Dsg1c).